The following is a 195-amino-acid chain: HTH-type transcriptional regulator BetI (195 aa).

In terms of domain architecture, HTH tetR-type spans 8–68 (SIRRRQLIDA…ATMRDITSQL (61 aa)). The segment at residues 31 to 50 (TIAQIARRAGVSTGIISHYF) is a DNA-binding region (H-T-H motif).

The protein operates within amine and polyamine biosynthesis; betaine biosynthesis via choline pathway [regulation]. In terms of biological role, repressor involved in the biosynthesis of the osmoprotectant glycine betaine. It represses transcription of the choline transporter BetT and the genes of BetAB involved in the synthesis of glycine betaine. In Escherichia coli (strain SMS-3-5 / SECEC), this protein is HTH-type transcriptional regulator BetI.